The chain runs to 204 residues: Small ribosomal subunit protein uS4 (204 aa).

The 62-residue stretch at 92–153 folds into the S4 RNA-binding domain; that stretch reads RRLDALVLRS…RSKEKTLFTI (62 aa).

Belongs to the universal ribosomal protein uS4 family. Part of the 30S ribosomal subunit. Contacts protein S5. The interaction surface between S4 and S5 is involved in control of translational fidelity.

In terms of biological role, one of the primary rRNA binding proteins, it binds directly to 16S rRNA where it nucleates assembly of the body of the 30S subunit. Its function is as follows. With S5 and S12 plays an important role in translational accuracy. This chain is Small ribosomal subunit protein uS4, found in Streptomyces coelicolor (strain ATCC BAA-471 / A3(2) / M145).